The following is a 237-amino-acid chain: Phosphoribosylaminoimidazole-succinocarboxamide synthase (237 aa).

This sequence belongs to the SAICAR synthetase family.

It carries out the reaction 5-amino-1-(5-phospho-D-ribosyl)imidazole-4-carboxylate + L-aspartate + ATP = (2S)-2-[5-amino-1-(5-phospho-beta-D-ribosyl)imidazole-4-carboxamido]succinate + ADP + phosphate + 2 H(+). The protein operates within purine metabolism; IMP biosynthesis via de novo pathway; 5-amino-1-(5-phospho-D-ribosyl)imidazole-4-carboxamide from 5-amino-1-(5-phospho-D-ribosyl)imidazole-4-carboxylate: step 1/2. The chain is Phosphoribosylaminoimidazole-succinocarboxamide synthase from Campylobacter fetus subsp. fetus (strain 82-40).